Consider the following 2550-residue polypeptide: Highly reducing polyketide synthase otaA (2550 aa).

A Ketosynthase family 3 (KS3) domain is found at 9–431 (SEPLAIIGLA…GTNAHAVVED (423 aa)). Residues Cys182, His317, and His355 each act as for beta-ketoacyl synthase activity in the active site. The segment at 572–894 (FVFTGQGANW…KRYETNGSTI (323 aa)) is malonyl-CoA:ACP transacylase (MAT) domain. Residues 959–1094 (HELLGVPVED…GSVRAETGPP (136 aa)) are N-terminal hotdog fold. Residues 959-1252 (HELLGVPVED…DLVQLPANND (294 aa)) are dehydratase (DH) domain. One can recognise a PKS/mFAS DH domain in the interval 959 to 1253 (HELLGVPVED…LVQLPANNDD (295 aa)). Positions 1107–1253 (AEPVDIAQMY…LVQLPANNDD (147 aa)) are C-terminal hotdog fold. Ile1420 and Glu1442 together coordinate S-adenosyl-L-methionine. The segment at 1433 to 1612 (HAQTGIKILE…GLRPRLIIND (180 aa)) is methyltransferase (CMeT) domain. The segment at 1859-1919 (PDEVKIRIHA…DQVMALRTGP (61 aa)) is enoyl reductase (ER) (ER) domain. The ketoreductase (KR) domain stretch occupies residues 2166–2345 (ASYLLIGGFG…PATSVSLGSV (180 aa)). One can recognise a Carrier domain in the interval 2454-2531 (AAVEVVTRAI…QLAQQAADAS (78 aa)). Residue Ser2491 is modified to O-(pantetheine 4'-phosphoryl)serine.

Pantetheine 4'-phosphate is required as a cofactor.

The catalysed reaction is 4 malonyl-CoA + acetyl-CoA + 5 NADPH + 9 H(+) = 7-methylmellein + 3 CO2 + 5 NADP(+) + 5 CoA + 4 H2O. It participates in mycotoxin biosynthesis. Its function is as follows. Highly reducing polyketide synthase; part of the gene cluster that mediates the biosynthesis of ochratoxin A (OTA), a mycotoxin composed of a chlorinated type I polyketide dihydroisocoumarin moiety linked to L-phenylalanine, and demonstrated to have nephrotoxic, immunotoxic, genotoxic, neurotoxic, and teratogenic properties. OtaA catalyzes the condensation of one acetate and 4 malonate units to form the isocoumarin group. The pathway begins with the highly reducing polyketide synthase otaA that catalyzes the formation of the isocoumarin group during the initial stages of biosynthesis, starting from one acetate and 4 malonate units, to originate the characteristic pentaketide skeleton 7-methylmellein (7-MM) of the OTA molecule. The newly identified cyclase otaY might be involved in the polyketide cyclization reaction during the initial steps of the OTA biosynthesis. 7-MM is then oxidized into 7-carboxymellein (also called ochratoxin beta) by the cytochrome P450 monooxygenase otaC. The NRPS encoded by the otaB gene is involved in the linking of phenylalanine to the dihydroisocoumarin ring. The reaction catalyzed by NRPS results in the production of ochratoxin B (OTB), which is the non-chlorinated analog of OTA and which subsequently serves as the substrate of the halogenase otaD for chlorination activity to form the final molecular structure of OTA, containing a chlorine atom in the C-5 position of the molecule. The sequence is that of Highly reducing polyketide synthase otaA from Aspergillus niger (strain ATCC MYA-4892 / CBS 513.88 / FGSC A1513).